Consider the following 317-residue polypeptide: MLRQVKPKNARTKRALEKREPKLVEGAKTAIFLRGNATSQISLDVLGDIHALKKPFSVNFQKKNNILPFEDASSLEFFSEKNDAALAVMATHNKKRPHNLTWVRFFNYRVLDMIELGIVNYKSIQSFSATPIVPGTKPMILFQGPVFDAHPTYRHIKSLFLDFFRGEPIQKLDSAGLSYVIVVSAAEAQEDETKPLPLVHFRVYGTKLLKTKTNLPRVELEEMGPRIDFNIRRVQPAESDVLEEALKKPKTQEPKPKKNVDVDIIGNKVGRIHVDQQDLGNLQTRKMKGLKRSVEEREDSENEEVEIEEDVISDASE.

Residues 28–240 (KTAIFLRGNA…IRRVQPAESD (213 aa)) enclose the Brix domain. The tract at residues 287 to 317 (MKGLKRSVEEREDSENEEVEIEEDVISDASE) is disordered. Phosphoserine is present on residues S293, S300, S313, and S316. The segment covering 296–317 (EREDSENEEVEIEEDVISDASE) has biased composition (acidic residues).

This sequence belongs to the RPF2 family. Component of a hexameric 5S RNP precursor complex, composed of 5S RNA, rrs1, rpf2, rpl5a/rpl5b, rpl11a/rpl11b and syo1; this complex acts as a precursor for ribosome assembly.

It localises to the nucleus. The protein resides in the nucleolus. The protein is Ribosome production factor 2 homolog of Schizosaccharomyces pombe (strain 972 / ATCC 24843) (Fission yeast).